Reading from the N-terminus, the 264-residue chain is 2-C-methyl-D-erythritol 4-phosphate cytidylyltransferase (264 aa).

Positions 234–264 are disordered; that stretch reads ARDPESAHPQSSVLASAFSGPGSRVSGPEEI.

The protein belongs to the IspD/TarI cytidylyltransferase family. IspD subfamily.

The catalysed reaction is 2-C-methyl-D-erythritol 4-phosphate + CTP + H(+) = 4-CDP-2-C-methyl-D-erythritol + diphosphate. Its pathway is isoprenoid biosynthesis; isopentenyl diphosphate biosynthesis via DXP pathway; isopentenyl diphosphate from 1-deoxy-D-xylulose 5-phosphate: step 2/6. Catalyzes the formation of 4-diphosphocytidyl-2-C-methyl-D-erythritol from CTP and 2-C-methyl-D-erythritol 4-phosphate (MEP). The sequence is that of 2-C-methyl-D-erythritol 4-phosphate cytidylyltransferase from Xanthomonas euvesicatoria pv. vesicatoria (strain 85-10) (Xanthomonas campestris pv. vesicatoria).